A 430-amino-acid chain; its full sequence is UDP-N-acetylglucosamine 1-carboxyvinyltransferase (430 aa).

22–23 contacts phosphoenolpyruvate; sequence KN. Arg-102 lines the UDP-N-acetyl-alpha-D-glucosamine pocket. Catalysis depends on Cys-126, which acts as the Proton donor. 2-(S-cysteinyl)pyruvic acid O-phosphothioketal is present on Cys-126. UDP-N-acetyl-alpha-D-glucosamine contacts are provided by residues 131 to 135, 172 to 175, Asp-317, and Ile-339; these read RPVDL and KVSV.

It belongs to the EPSP synthase family. MurA subfamily.

Its subcellular location is the cytoplasm. It carries out the reaction phosphoenolpyruvate + UDP-N-acetyl-alpha-D-glucosamine = UDP-N-acetyl-3-O-(1-carboxyvinyl)-alpha-D-glucosamine + phosphate. It functions in the pathway cell wall biogenesis; peptidoglycan biosynthesis. Its function is as follows. Cell wall formation. Adds enolpyruvyl to UDP-N-acetylglucosamine. This is UDP-N-acetylglucosamine 1-carboxyvinyltransferase from Rhizobium leguminosarum bv. trifolii (strain WSM2304).